The chain runs to 324 residues: tRNA dimethylallyltransferase (324 aa).

17 to 24 (GPTASGKT) serves as a coordination point for ATP. 19–24 (TASGKT) provides a ligand contact to substrate. Interaction with substrate tRNA regions lie at residues 42–45 (DSAL), 166–170 (QRIQR), and 251–256 (RCVGYR).

The protein belongs to the IPP transferase family. As to quaternary structure, monomer. Mg(2+) serves as cofactor.

The catalysed reaction is adenosine(37) in tRNA + dimethylallyl diphosphate = N(6)-dimethylallyladenosine(37) in tRNA + diphosphate. Catalyzes the transfer of a dimethylallyl group onto the adenine at position 37 in tRNAs that read codons beginning with uridine, leading to the formation of N6-(dimethylallyl)adenosine (i(6)A). This Burkholderia pseudomallei (strain 1106a) protein is tRNA dimethylallyltransferase.